The chain runs to 353 residues: Phospho-furanose lactonase (353 aa).

Zn(2+)-binding residues include His-24, His-26, Lys-153, His-186, and His-214. The residue at position 153 (Lys-153) is an N6-carboxylysine. 244–245 lines the substrate pocket; the sequence is KY. Asp-272 lines the Zn(2+) pocket. Substrate is bound at residue 275–278; that stretch reads RILY.

It belongs to the metallo-dependent hydrolases superfamily. Phosphotriesterase family. The cofactor is Zn(2+).

The catalysed reaction is a 1,4-lactone + H2O = a 4-hydroxyacid + H(+). It catalyses the reaction D-xylono-1,4-lactone 5-phosphate + H2O = 5-phospho-D-xylonate + H(+). The enzyme catalyses L-arabino-1,4-lactone 5-phosphate + H2O = 5-phospho-L-arabinonate + H(+). Its function is as follows. Catalyzes the hydrolysis of D-xylono-1,4-lactone-5-phosphate and L-arabino-1,4-lactone-5-phosphate. Also able to hydrolyze carboxy 1,4-lactones. The protein is Phospho-furanose lactonase of Mycoplasmopsis synoviae (strain 53) (Mycoplasma synoviae).